Reading from the N-terminus, the 247-residue chain is Ubiquinone biosynthesis O-methyltransferase (247 aa).

The S-adenosyl-L-methionine site is built by arginine 39, glycine 70, aspartate 91, and methionine 134.

This sequence belongs to the methyltransferase superfamily. UbiG/COQ3 family.

The catalysed reaction is a 3-demethylubiquinol + S-adenosyl-L-methionine = a ubiquinol + S-adenosyl-L-homocysteine + H(+). The enzyme catalyses a 3-(all-trans-polyprenyl)benzene-1,2-diol + S-adenosyl-L-methionine = a 2-methoxy-6-(all-trans-polyprenyl)phenol + S-adenosyl-L-homocysteine + H(+). It participates in cofactor biosynthesis; ubiquinone biosynthesis. In terms of biological role, O-methyltransferase that catalyzes the 2 O-methylation steps in the ubiquinone biosynthetic pathway. The sequence is that of Ubiquinone biosynthesis O-methyltransferase from Cereibacter sphaeroides (strain ATCC 17025 / ATH 2.4.3) (Rhodobacter sphaeroides).